The sequence spans 132 residues: Ribonuclease VapC15 (132 aa).

Positions 1–121 (MIVDTSVWIA…HRDRDYEAIR (121 aa)) constitute a PINc domain. Position 96 (D96) interacts with Mg(2+). Mn(2+) contacts are provided by D96, D114, and D116.

The protein belongs to the PINc/VapC protein family. In terms of assembly, crystallizes as a VapB15-VapC15(2) heterotrimer and as a VapB15(2)-VapC15(2) heterotetramer; each toxin pair forms a homodimer which creates a channel in which the antitoxin binds. Requires Mg(2+) as cofactor. It depends on Mn(2+) as a cofactor.

With respect to regulation, RNase activity inhibited by EDTA. Toxic component of a type II toxin-antitoxin (TA) system. Degrades total E.coli RNA, which is partially inhibited by cognate antitoxin VapB15. Upon expression in M.smegmatis inhibits colony formation, which is neutralized by coexpression with VapB15. The sequence is that of Ribonuclease VapC15 from Mycobacterium tuberculosis (strain ATCC 25618 / H37Rv).